A 113-amino-acid polypeptide reads, in one-letter code: RING-box protein 2 (113 aa).

Residues 1-26 (MADVEDGEETCALASHSGSSGSKSGG) are disordered. Alanine 2 bears the N-acetylalanine mark. Residue threonine 10 is modified to Phosphothreonine; by CK2. Residues cysteine 50, cysteine 53, cysteine 61, cysteine 64, cysteine 73, cysteine 80, histidine 82, histidine 85, cysteine 87, cysteine 88, cysteine 99, and cysteine 102 each coordinate Zn(2+). The RING-type zinc finger occupies 61–103 (CLRCQAENKQEDCVVVWGECNHSFHNCCMSLWVKQNNRCPLCQ).

This sequence belongs to the RING-box family. Catalytic component of multiple cullin-5-RING E3 ubiquitin-protein ligase complexes (ECS complexes, also named CRL5 complexes) composed of CUL5, Elongin BC (ELOB and ELOC), RNF7/RBX2 and a variable SOCS box domain-containing protein as substrate-specific recognition component. Also interacts (with lower preference) with CUL1, CUL2, CUL3, CUL4A and CUL4B; additional evidence is however required to confirm this result in vivo. Interacts with UBE2F. Interacts with CSNK2B, the interaction is not affected by phosphorylation by CK2. May also interact with DCUN1D1, DCUN1D2, DCUN1D3, DCUN1D4 and DCUN1D5. As to quaternary structure, (Microbial infection) Following infection by HIV-1 virus, component of a cullin-5-RING E3 ubiquitin-protein ligase complex (ECS complex) hijacked by the HIV-1 Vif protein. Post-translationally, phosphorylation at Thr-10 by CK2 promotes its degradation by the proteasome. Expressed in heart, liver, skeletal muscle and pancreas. At very low levels expressed in brain, placenta and lung.

The protein localises to the cytoplasm. The protein resides in the nucleus. The catalysed reaction is S-ubiquitinyl-[E2 ubiquitin-conjugating enzyme]-L-cysteine + [acceptor protein]-L-lysine = [E2 ubiquitin-conjugating enzyme]-L-cysteine + N(6)-ubiquitinyl-[acceptor protein]-L-lysine.. It catalyses the reaction S-[NEDD8-protein]-yl-[E2 NEDD8-conjugating enzyme]-L-cysteine + [cullin]-L-lysine = [E2 NEDD8-conjugating enzyme]-L-cysteine + N(6)-[NEDD8-protein]-yl-[cullin]-L-lysine.. It functions in the pathway protein modification; protein ubiquitination. The protein operates within protein modification; protein neddylation. Its function is as follows. Catalytic component of multiple cullin-5-RING E3 ubiquitin-protein ligase complexes (ECS complexes), which mediate the ubiquitination and subsequent proteasomal degradation of target proteins. It is thereby involved in various biological processes, such as cell cycle progression, signal transduction and transcription. The functional specificity of the E3 ubiquitin-protein ligase ECS complexes depend on the variable SOCS box-containing substrate recognition component. Within ECS complexes, RNF7/RBX2 recruits the E2 ubiquitination enzyme to the complex via its RING-type and brings it into close proximity to the substrate. Catalytic subunit of various SOCS-containing ECS complexes, such as the ECS(SOCS7) complex, that regulate reelin signaling by mediating ubiquitination and degradation of DAB1. The ECS(SOCS2) complex mediates the ubiquitination and subsequent proteasomal degradation of phosphorylated EPOR and GHR. Promotes ubiquitination and degradation of NF1, thereby regulating Ras protein signal transduction. As part of the ECS(ASB9) complex, catalyzes ubiquitination and degradation of CKB. The ECS(SPSB3) complex catalyzes ubiquitination of nuclear CGAS. As part of the ECS(RAB40C) complex, mediates ANKRD28 ubiquitination and degradation, thereby inhibiting protein phosphatase 6 (PP6) complex activity and focal adhesion assembly during cell migration. As part of some ECS complex, catalyzes 'Lys-11'-linked ubiquitination and degradation of BTRC. ECS complexes and ARIH2 collaborate in tandem to mediate ubiquitination of target proteins; ARIH2 mediating addition of the first ubiquitin on CRLs targets. Specifically catalyzes the neddylation of CUL5 via its interaction with UBE2F. Does not catalyze neddylation of other cullins (CUL1, CUL2, CUL3, CUL4A or CUL4B). May play a role in protecting cells from apoptosis induced by redox agents. Functionally, inactive. In terms of biological role, (Microbial infection) Following infection by HIV-1 virus, catalytic component of a cullin-5-RING E3 ubiquitin-protein ligase complex (ECS complex) hijacked by the HIV-1 Vif protein, which catalyzes ubiquitination and degradation of APOBEC3F and APOBEC3G. The sequence is that of RING-box protein 2 from Homo sapiens (Human).